The following is an 810-amino-acid chain: Protein kinase C-binding protein NELL1 (810 aa).

The first 21 residues, 1 to 21 (MPMDLILVVWFCVCTARTVVG), serve as a signal peptide directing secretion. N40, N53, N83, N224, N294, and N372 each carry an N-linked (GlcNAc...) asparagine glycan. In terms of domain architecture, Laminin G-like spans 64-227 (EREIHAAPHV…TQCPNLNHTC (164 aa)). Residues 271–332 (KTCQVSGLLY…IAGQCCKVCR (62 aa)) form the VWFC 1 domain. 3 disulfides stabilise this stretch: C395–C407, C401–C416, and C418–C432. D434, I435, and E437 together coordinate Ca(2+). The EGF-like 1; calcium-binding domain maps to 434-475 (DIDECAAKMHYCHANTVCVNLPGLYRCDCVPGYIRVDDFSCT). Intrachain disulfides connect C438–C451, C445–C460, C462–C474, C480–C493, C487–C502, C504–C515, C519–C529, C523–C535, C537–C546, C553–C566, C560–C575, C577–C594, C600–C613, C607–C622, and C624–C630. Ca(2+) is bound by residues N453, L454, and L457. One can recognise an EGF-like 2; calcium-binding domain in the interval 476-516 (EHDECGSGQHNCDENAICTNTVQGHSCTCKPGYVGNGTICR). Residue N511 is glycosylated (N-linked (GlcNAc...) asparagine). An EGF-like 3 domain is found at 517–547 (AFCEEGCRYGGTCVAPNKCVCPSGFTGSHCE). The 39-residue stretch at 549 to 587 (DIDECSEGIIECHNHSRCVNLPGWYHCECRSGFHDDGTY) folds into the EGF-like 4; calcium-binding domain. N562 is a glycosylation site (N-linked (GlcNAc...) asparagine). The EGF-like 5; calcium-binding domain occupies 596–631 (DIDECALRTHTCWNDSACINLAGGFDCLCPSGPSCS). N609 carries an N-linked (GlcNAc...) asparagine glycan. Residues 692–750 (SQCLDQNGHKLYRSGDNWTHSCQQCRCLEGEVDCWPLTCPNLSCEYTAILEGECCPRCV) enclose the VWFC 2 domain. Residues N708, N732, and N758 are each glycosylated (N-linked (GlcNAc...) asparagine).

In terms of assembly, homotrimer. Binds to PKC beta-1. Interacts with ATRAID; the interaction promotes osteoblast cell differentiation and mineralization. Interacts with ROBO3.

It localises to the cytoplasm. Its subcellular location is the nucleus envelope. The protein resides in the secreted. Its function is as follows. Plays a role in the control of cell growth and differentiation. Promotes osteoblast cell differentiation and terminal mineralization. The polypeptide is Protein kinase C-binding protein NELL1 (NELL1) (Homo sapiens (Human)).